A 596-amino-acid polypeptide reads, in one-letter code: MISSLNPLFTTHRSGVIAQQFFASSAAASINSVSSLKIAACSKTKLVDQSPLRQSGNHQLLSSDFNHLQSLKNDYAEEKYKSRCEVLKEQVKMMLDQEMDVVNQLELIDDLQRLGLSYHFGDEITSVLSGIYNRKSMNKMRNQWGLYATCLEFRLLRQHGFDVSQEIFDCFKDEKGDFRPSLCEDSKGMLYLYEASYLESENEESNLEMARRFAAKTLKKNLDEKRVDQDLVALVQHALELPLHWRMMRLEARWFIDIYEERSNRNPILLELAKLDFNIVQAAHQNDLTYTLRWWRSTCLAEKLTFARDMMVENFFWTVGIISDPQRGNGRRILTKVVALITAIDDIYDCYGTLDELEVFTTAVERWDVNSIDQLPDCMKICFLALYNFVNEMAYDALKEQGVNIIPYLRKSWADLCKAYLQEAKWFFSGEVPTLQQYLNNAWISISAPAFLVHAYFCVDYPINKDHLQYLDNYHKIIRCSAMILRLTNDLGTSPESEVLNVGDVPKSIRCYMKETGACEEKAREHLRFLITEAWKQMEEAQTLDSPFSSTFNGIAVNLARMGLCMYQHGDGHGHQNSEPRDRILSLLFEPICCLA.

The transit peptide at 1-39 directs the protein to the chloroplast; it reads MISSLNPLFTTHRSGVIAQQFFASSAAASINSVSSLKIA. (2E)-geranyl diphosphate-binding residues include R308, D345, D349, R486, and N489. Mg(2+)-binding residues include D345 and D349. The DDXXD motif signature appears at 345–349; it reads DDIYD. Residues N489, T493, and S497 each coordinate Mg(2+).

This sequence belongs to the terpene synthase family. Tpsb subfamily. As to quaternary structure, monomer. It depends on Mg(2+) as a cofactor. Mn(2+) is required as a cofactor. In terms of tissue distribution, expressed in flowers and fruits.

It is found in the plastid. It localises to the chloroplast. The catalysed reaction is (2E)-geranyl diphosphate = beta-myrcene + diphosphate. It carries out the reaction (2E)-geranyl diphosphate + H2O = linalool + diphosphate. It catalyses the reaction (2E)-geranyl diphosphate = (Z)-beta-ocimene + diphosphate. The enzyme catalyses (2E)-geranyl diphosphate = (E)-beta-ocimene + diphosphate. Its pathway is secondary metabolite biosynthesis; terpenoid biosynthesis. Its function is as follows. Monoterpene synthase (mono-TPS) involved in the biosynthesis of monoterpenes natural products, constituent of coffee beverage aroma. Catalyzes the conversion of (2E)-geranyl diphosphate (GPP) into linalool and beta-myrcene, and, as minor products, cis-ocimene and trans-ocimene. Not able to use geranylgeranyl pyrophosphate (GGPP) and farnesyl pyrophosphate (FPP) as substrates. This chain is Linalool synthase TPS3, chloroplastic, found in Coffea arabica (Arabian coffee).